The sequence spans 1648 residues: AT-rich interactive domain-containing protein arid-1 (1648 aa).

Disordered stretches follow at residues 150–270 and 284–307; these read ISEA…PVIN and RKLE…EEKL. 3 stretches are compositionally biased toward acidic residues: residues 166–193, 219–228, and 251–260; these read DDDE…DTEE, TQSEESSADS, and SDEEDQEDLA. Polar residues predominate over residues 261-270; the sequence is TTDSENPVIN. The 91-residue stretch at 655–745 folds into the ARID domain; it reads AETKDLFVAM…FLESYLAINT (91 aa). Disordered regions lie at residues 763–935, 1095–1563, and 1628–1648; these read VLPG…KEDT, SEKR…KPHD, and KTAS…TPRP. Positions 848–860 are enriched in acidic residues; sequence SDDVTDVPDDMTD. Basic and acidic residues-rich tracts occupy residues 861–878 and 925–935; these read HEDL…ERKS and SEGRGPRKEDT. Composition is skewed to acidic residues over residues 1102 to 1112 and 1145 to 1154; these read DDDESSDSDTD and GDEEAEEEVK. A compositionally biased stretch (low complexity) spans 1165-1185; sequence QESPPTTSQGTTTPETAATGG. The span at 1195-1208 shows a compositional bias: pro residues; the sequence is YPPVPEELVPPPPV. Residues 1213–1251 show a composition bias toward polar residues; sequence FPSTDRFSSGGSSNYPTLSRQGSINSMASPMFSPNSDLS. Positions 1313–1326 are enriched in basic and acidic residues; sequence RASERSIDSASEHH. Polar residues predominate over residues 1348–1357; the sequence is ISTTQPTDTS. The span at 1377 to 1392 shows a compositional bias: low complexity; the sequence is ASPTLLTSGPLTLSSS. The span at 1393-1404 shows a compositional bias: pro residues; that stretch reads APPPPPASPAPP. 2 stretches are compositionally biased toward low complexity: residues 1474 to 1486 and 1531 to 1541; these read STTT…PKSI and TPTTMTTSTPT. The segment covering 1542 to 1551 has biased composition (polar residues); that stretch reads RADSFQTQKN.

It is found in the nucleus. DNA-binding protein which modulates activity of several transcription factors. Plays a role in the modulation of endoplasmic reticulum (ER) homeostasis during chemical and pathogen stress, including exposure to the Gram-negative bacterium P.aeruginosa. The protein is AT-rich interactive domain-containing protein arid-1 of Caenorhabditis elegans.